Consider the following 424-residue polypeptide: Serine--tRNA ligase (424 aa).

Position 233–235 (233–235) interacts with L-serine; sequence TAE. Residues 264-266 and Val280 contribute to the ATP site; that span reads RRE. Glu287 is a binding site for L-serine. An ATP-binding site is contributed by 351–354; that stretch reads EISS. Ser386 is an L-serine binding site.

This sequence belongs to the class-II aminoacyl-tRNA synthetase family. Type-1 seryl-tRNA synthetase subfamily. In terms of assembly, homodimer. The tRNA molecule binds across the dimer.

The protein localises to the cytoplasm. It carries out the reaction tRNA(Ser) + L-serine + ATP = L-seryl-tRNA(Ser) + AMP + diphosphate + H(+). It catalyses the reaction tRNA(Sec) + L-serine + ATP = L-seryl-tRNA(Sec) + AMP + diphosphate + H(+). The protein operates within aminoacyl-tRNA biosynthesis; selenocysteinyl-tRNA(Sec) biosynthesis; L-seryl-tRNA(Sec) from L-serine and tRNA(Sec): step 1/1. Functionally, catalyzes the attachment of serine to tRNA(Ser). Is also able to aminoacylate tRNA(Sec) with serine, to form the misacylated tRNA L-seryl-tRNA(Sec), which will be further converted into selenocysteinyl-tRNA(Sec). The chain is Serine--tRNA ligase from Kosmotoga olearia (strain ATCC BAA-1733 / DSM 21960 / TBF 19.5.1).